The primary structure comprises 94 residues: MPPPRGKFSKDRKTKRNQQSLLFKRKRFCRFTVTGVKEIDYKDLDVLRDFVGENGKITPARLTGTRAFFQRQLTTAIKRARFLALLPYSDQHKV.

Belongs to the bacterial ribosomal protein bS18 family. Part of the 30S ribosomal subunit. Forms a tight heterodimer with protein bS6.

Its function is as follows. Binds as a heterodimer with protein bS6 to the central domain of the 16S rRNA, where it helps stabilize the platform of the 30S subunit. This chain is Small ribosomal subunit protein bS18, found in Leptothrix cholodnii (strain ATCC 51168 / LMG 8142 / SP-6) (Leptothrix discophora (strain SP-6)).